We begin with the raw amino-acid sequence, 150 residues long: Major facilitator superfamily domain-containing 14C pseudogene (150 aa).

The tract at residues 1–25 is disordered; that stretch reads MSVEPPPELEEKAASEPEAGAMPEK. At 1–49 the chain is on the extracellular side; sequence MSVEPPPELEEKAASEPEAGAMPEKRAGAQAAGSTWLQGFGPPSVYHAA. Residues 50 to 70 form a helical membrane-spanning segment; that stretch reads IVIFLEFFAWGLLTTPMLTVL. The Cytoplasmic segment spans residues 71–82; the sequence is HETFSQHTFLMN. Residues 83-103 traverse the membrane as a helical segment; it reads GLIQGVKGLLSFLSAPLIGAL. Over 104–111 the chain is Extracellular; the sequence is SDVWGRKP. A helical transmembrane segment spans residues 112 to 132; that stretch reads FLLGTVFFTCFPIPLMRISPC. Residues 133–150 are Cytoplasmic-facing; it reads RVWWRAPVVPATCGRRMA.

The protein belongs to the major facilitator superfamily.

Its subcellular location is the membrane. The protein is Major facilitator superfamily domain-containing 14C pseudogene of Homo sapiens (Human).